The sequence spans 413 residues: Putative F-box protein At3g17560 (413 aa).

The 47-residue stretch at 9–55 (TKLLFDLPQDVIEEIFSKVPVTCLRRIRSTCKRLYALLKDRGFIRKH) folds into the F-box domain.

The polypeptide is Putative F-box protein At3g17560 (Arabidopsis thaliana (Mouse-ear cress)).